Here is a 152-residue protein sequence, read N- to C-terminus: Deoxyuridine 5'-triphosphate nucleotidohydrolase (152 aa).

Substrate-binding positions include 71–73 (RSG), N84, 88–90 (LID), and M98.

It belongs to the dUTPase family. As to quaternary structure, homotrimer. The cofactor is Mg(2+).

It carries out the reaction dUTP + H2O = dUMP + diphosphate + H(+). Its pathway is pyrimidine metabolism; dUMP biosynthesis; dUMP from dCTP (dUTP route): step 2/2. In terms of biological role, this enzyme is involved in nucleotide metabolism: it produces dUMP, the immediate precursor of thymidine nucleotides and it decreases the intracellular concentration of dUTP so that uracil cannot be incorporated into DNA. The chain is Deoxyuridine 5'-triphosphate nucleotidohydrolase from Escherichia coli O1:K1 / APEC.